Here is a 226-residue protein sequence, read N- to C-terminus: Ribonuclease 3 (226 aa).

An RNase III domain is found at 7 to 129 (LPRLCRTLGY…IIGAIYLDSD (123 aa)). Glutamate 42 serves as a coordination point for Mg(2+). The active site involves aspartate 46. Mg(2+) contacts are provided by aspartate 115 and glutamate 118. The active site involves glutamate 118. The DRBM domain occupies 156–226 (DAKTLLQEYL…AAQVLELLKK (71 aa)).

Belongs to the ribonuclease III family. In terms of assembly, homodimer. Mg(2+) is required as a cofactor.

It is found in the cytoplasm. The catalysed reaction is Endonucleolytic cleavage to 5'-phosphomonoester.. Digests double-stranded RNA. Involved in the processing of primary rRNA transcript to yield the immediate precursors to the large and small rRNAs (23S and 16S). Processes some mRNAs, and tRNAs when they are encoded in the rRNA operon. Processes pre-crRNA and tracrRNA of type II CRISPR loci if present in the organism. The sequence is that of Ribonuclease 3 from Shewanella sp. (strain ANA-3).